We begin with the raw amino-acid sequence, 274 residues long: Hydroxyethylthiazole kinase (274 aa).

Met46 serves as a coordination point for substrate. The ATP site is built by Arg122 and Thr173. Substrate is bound at residue Gly200.

This sequence belongs to the Thz kinase family. Mg(2+) is required as a cofactor.

It catalyses the reaction 5-(2-hydroxyethyl)-4-methylthiazole + ATP = 4-methyl-5-(2-phosphooxyethyl)-thiazole + ADP + H(+). The protein operates within cofactor biosynthesis; thiamine diphosphate biosynthesis; 4-methyl-5-(2-phosphoethyl)-thiazole from 5-(2-hydroxyethyl)-4-methylthiazole: step 1/1. Functionally, catalyzes the phosphorylation of the hydroxyl group of 4-methyl-5-beta-hydroxyethylthiazole (THZ). This Clostridium tetani (strain Massachusetts / E88) protein is Hydroxyethylthiazole kinase.